The primary structure comprises 380 residues: uncharacterized protein (380 aa).

The next 9 membrane-spanning stretches (helical) occupy residues 15–35, 45–65, 75–95, 98–118, 123–143, 182–202, 217–237, 303–323, and 341–361; these read LFHP…LAFP, LFKI…PFIF, ILYL…FKIT, LFLS…FVKF, IFVD…VLIY, IIAF…MLFI, MVLL…IILL, GTIY…LGVI, and LLLA…LSLL.

It is found in the cell membrane. This is an uncharacterized protein from Methanocaldococcus jannaschii (strain ATCC 43067 / DSM 2661 / JAL-1 / JCM 10045 / NBRC 100440) (Methanococcus jannaschii).